Reading from the N-terminus, the 397-residue chain is Tryptophan synthase beta chain (397 aa).

Lys-86 is modified (N6-(pyridoxal phosphate)lysine).

Belongs to the TrpB family. In terms of assembly, tetramer of two alpha and two beta chains. It depends on pyridoxal 5'-phosphate as a cofactor.

The enzyme catalyses (1S,2R)-1-C-(indol-3-yl)glycerol 3-phosphate + L-serine = D-glyceraldehyde 3-phosphate + L-tryptophan + H2O. The protein operates within amino-acid biosynthesis; L-tryptophan biosynthesis; L-tryptophan from chorismate: step 5/5. The beta subunit is responsible for the synthesis of L-tryptophan from indole and L-serine. The protein is Tryptophan synthase beta chain of Aeromonas salmonicida (strain A449).